Here is a 232-residue protein sequence, read N- to C-terminus: Aspartate/glutamate leucyltransferase (232 aa).

This sequence belongs to the R-transferase family. Bpt subfamily.

Its subcellular location is the cytoplasm. It carries out the reaction N-terminal L-glutamyl-[protein] + L-leucyl-tRNA(Leu) = N-terminal L-leucyl-L-glutamyl-[protein] + tRNA(Leu) + H(+). The enzyme catalyses N-terminal L-aspartyl-[protein] + L-leucyl-tRNA(Leu) = N-terminal L-leucyl-L-aspartyl-[protein] + tRNA(Leu) + H(+). Its function is as follows. Functions in the N-end rule pathway of protein degradation where it conjugates Leu from its aminoacyl-tRNA to the N-termini of proteins containing an N-terminal aspartate or glutamate. The chain is Aspartate/glutamate leucyltransferase from Vibrio vulnificus (strain YJ016).